A 657-amino-acid chain; its full sequence is 1-deoxy-D-xylulose-5-phosphate synthase (657 aa).

Thiamine diphosphate is bound by residues His-73 and 113 to 115 (SHA). Asp-145 lines the Mg(2+) pocket. Thiamine diphosphate-binding positions include 146 to 147 (GA), Asn-175, Tyr-293, and Glu-375. Asn-175 is a binding site for Mg(2+).

Belongs to the transketolase family. DXPS subfamily. Homodimer. The cofactor is Mg(2+). Thiamine diphosphate serves as cofactor.

It carries out the reaction D-glyceraldehyde 3-phosphate + pyruvate + H(+) = 1-deoxy-D-xylulose 5-phosphate + CO2. Its pathway is metabolic intermediate biosynthesis; 1-deoxy-D-xylulose 5-phosphate biosynthesis; 1-deoxy-D-xylulose 5-phosphate from D-glyceraldehyde 3-phosphate and pyruvate: step 1/1. Its function is as follows. Catalyzes the acyloin condensation reaction between C atoms 2 and 3 of pyruvate and glyceraldehyde 3-phosphate to yield 1-deoxy-D-xylulose-5-phosphate (DXP). The sequence is that of 1-deoxy-D-xylulose-5-phosphate synthase from Renibacterium salmoninarum (strain ATCC 33209 / DSM 20767 / JCM 11484 / NBRC 15589 / NCIMB 2235).